Here is a 591-residue protein sequence, read N- to C-terminus: MTQGKIIKVSGPLVIASGMQEANIQDICRVGKLGLIGEIIEMRRDQASIQVYEETSGLGPGEPVVTTGEPLSVELGPGLISQMFDGIQRPLDRFKLATHNDFLVRGVEVPSLDRDIKWHFDSTIAIGQKVSTGDILGTVKETEVVNHKIMVPYGVSGEVVSIASGDFTIDEVVYEIKKLDGSFYKGTLMQKWPVRKARPVSKRLIPEEPLITGQRVIDAFFPVTKGGAAAVPGPFGAGKTVVQHQVAKFANVDIVIYVGCGERGNEMTDVLNEFPELIDPNTGQSIMQRTVLIANTSNMPVAAREASIYTGITMAEYFRDMGYSVAIMADSTSRWAEALREMSGRLEEMPGDEGYPAYLGSRIAEYYERAGRSQVLGLPEREGTITAIGAVSPPGGDISEPVTQNTLRIVKVFWGLDAPLAQRRHFPAINWLTSYSLYKDSVGTYIDGKEKTDWNSKITRAMNYLQRESSLEEIVRLVGIDSLSDNERLTMEIAKQIREDYLQQNAFDSVDTFTSFAKQEAMLSNILTFADQANHALELGSYFTEIMEGTVAVRDRMARSKYVSEDRLDEIKIISNEITHQIHLILETGGL.

ATP is bound at residue 233–240; it reads GPFGAGKT.

Belongs to the ATPase alpha/beta chains family.

The catalysed reaction is ATP + H2O + 4 H(+)(in) = ADP + phosphate + 5 H(+)(out). Its function is as follows. Produces ATP from ADP in the presence of a proton gradient across the membrane. The V-type alpha chain is a catalytic subunit. The polypeptide is V-type ATP synthase alpha chain (Streptococcus pneumoniae (strain ATCC 700669 / Spain 23F-1)).